The primary structure comprises 417 residues: 4-hydroxy-3-methylbut-2-en-1-yl diphosphate synthase (flavodoxin) (417 aa).

C303, C306, C349, and E356 together coordinate [4Fe-4S] cluster.

It belongs to the IspG family. Requires [4Fe-4S] cluster as cofactor.

It carries out the reaction (2E)-4-hydroxy-3-methylbut-2-enyl diphosphate + oxidized [flavodoxin] + H2O + 2 H(+) = 2-C-methyl-D-erythritol 2,4-cyclic diphosphate + reduced [flavodoxin]. Its pathway is isoprenoid biosynthesis; isopentenyl diphosphate biosynthesis via DXP pathway; isopentenyl diphosphate from 1-deoxy-D-xylulose 5-phosphate: step 5/6. Its function is as follows. Converts 2C-methyl-D-erythritol 2,4-cyclodiphosphate (ME-2,4cPP) into 1-hydroxy-2-methyl-2-(E)-butenyl 4-diphosphate. The sequence is that of 4-hydroxy-3-methylbut-2-en-1-yl diphosphate synthase (flavodoxin) from Mesorhizobium japonicum (strain LMG 29417 / CECT 9101 / MAFF 303099) (Mesorhizobium loti (strain MAFF 303099)).